The following is a 156-amino-acid chain: B3 domain-containing protein At5g26805 (156 aa).

A DNA-binding region (TF-B3) is located at residues 57-155; that stretch reads KFQLPMEKIR…MFCFSVLDGR (99 aa).

The protein localises to the nucleus. The polypeptide is B3 domain-containing protein At5g26805 (Arabidopsis thaliana (Mouse-ear cress)).